Here is a 528-residue protein sequence, read N- to C-terminus: Negative elongation factor A (528 aa).

The 160-residue stretch at Trp-89 to Leu-248 folds into the HDAg domain. Residues Arg-125 to Gln-188 are NELF-C/D-binding. Thr-157 carries the phosphothreonine modification. The segment at Leu-189–Leu-248 is RNAPII-binding. The segment at Lys-215–Arg-245 is disordered. Residues Ser-225 and Ser-233 each carry the phosphoserine modification. Positions Thr-227–Arg-238 are enriched in polar residues. Residue Thr-277 is modified to Phosphothreonine. The segment covering Pro-320–Ser-341 has biased composition (low complexity). The tract at residues Pro-320–Thr-409 is disordered. Position 363 is a phosphoserine (Ser-363).

This sequence belongs to the NELF-A family. The NELF complex is composed of NELFA, NELFB, NELFCD (isoform NELF-C or isoform NELF-D) and NELFE; NELFA and NELFCD form a stable subcomplex that binds to the N-terminus of NELFB. In vitro, the NELFA:NELFCD subcomplex binds to ssDNA and ssRNA in a sequence- and structure-dependent manner. Interacts with the RNA polymerase II complex when it is not phosphorylated by P-TEFb. As to expression, ubiquitous. Expressed in heart, brain, placenta, liver, skeletal muscle, kidney and pancreas. Expressed at lower level in adult lung. Expressed in fetal brain, lung, liver and kidney.

It is found in the nucleus. Essential component of the NELF complex, a complex that negatively regulates the elongation of transcription by RNA polymerase II. The NELF complex, which acts via an association with the DSIF complex and causes transcriptional pausing, is counteracted by the P-TEFb kinase complex. Its function is as follows. (Microbial infection) The NELF complex is involved in HIV-1 latency possibly involving recruitment of PCF11 to paused RNA polymerase II. The protein is Negative elongation factor A (NELFA) of Homo sapiens (Human).